A 437-amino-acid chain; its full sequence is UDP-glucose 6-dehydrogenase (437 aa).

NAD(+) is bound by residues valine 11, aspartate 30, lysine 35, threonine 86, threonine 122, and glutamate 155. Substrate is bound by residues 151 to 155, lysine 209, asparagine 213, 254 to 258, and glycine 262; these read EFLRE and FLHAG. Catalysis depends on cysteine 265, which acts as the Nucleophile. Lysine 268 lines the NAD(+) pocket. Lysine 326 contacts substrate. Arginine 333 provides a ligand contact to NAD(+).

This sequence belongs to the UDP-glucose/GDP-mannose dehydrogenase family.

The enzyme catalyses UDP-alpha-D-glucose + 2 NAD(+) + H2O = UDP-alpha-D-glucuronate + 2 NADH + 3 H(+). It participates in nucleotide-sugar biosynthesis; UDP-alpha-D-glucuronate biosynthesis; UDP-alpha-D-glucuronate from UDP-alpha-D-glucose: step 1/1. The protein operates within capsule biogenesis; capsule polysaccharide biosynthesis. The polypeptide is UDP-glucose 6-dehydrogenase (Rhizobium meliloti (strain 1021) (Ensifer meliloti)).